The sequence spans 219 residues: Cytidylate kinase (219 aa).

Residue 10 to 18 coordinates ATP; it reads GPAAAGKST.

Belongs to the cytidylate kinase family. Type 1 subfamily.

It localises to the cytoplasm. It catalyses the reaction CMP + ATP = CDP + ADP. The catalysed reaction is dCMP + ATP = dCDP + ADP. This chain is Cytidylate kinase, found in Staphylococcus aureus (strain bovine RF122 / ET3-1).